Consider the following 636-residue polypeptide: ABC transporter ATP-binding protein RamA (636 aa).

5 helical membrane passes run 45-65, 78-98, 175-195, 269-289, and 297-317; these read VLVLLCSVAAAVAAVAQPLAL, AGWWLPLSAALLLGELLLDSA, LVDVWVALCVLTGLPALALLL, GVLVPLLTLAATAVGGLRLAA, and LLAVGRYAQLTAGVGAAASLL. In terms of domain architecture, ABC transmembrane type-1 spans 45 to 322; it reads VLVLLCSVAA…AASLLGAIVR (278 aa). Residues 354 to 585 form the ABC transporter domain; that stretch reads LRLCGVRVLR…AGYREVFGAG (232 aa). 386–393 is a binding site for ATP; that stretch reads GRSGAGKS. A compositionally biased stretch (gly residues) spans 589 to 606; that stretch reads GAGAGAGAGADAGAGADA. A disordered region spans residues 589 to 636; sequence GAGAGAGAGADAGAGADAGPGPDSGAATAVGGSGPGPVRRPEPEEARP. A compositionally biased stretch (low complexity) spans 607 to 618; the sequence is GPGPDSGAATAV. Residues 627-636 are compositionally biased toward basic and acidic residues; it reads RRPEPEEARP.

This sequence belongs to the ABC transporter superfamily.

The protein localises to the cell membrane. Its function is as follows. Probably involved in exporting SapB from the cell. Expression of the ram locus (ramA, ramB and ramR) induces rapid aerial mycelium formation in S.lividans. This Streptomyces coelicolor (strain ATCC BAA-471 / A3(2) / M145) protein is ABC transporter ATP-binding protein RamA.